Consider the following 314-residue polypeptide: Homoserine O-succinyltransferase (314 aa).

Catalysis depends on Cys-142, which acts as the Acyl-thioester intermediate. Positions 163 and 192 each coordinate substrate. Catalysis depends on His-235, which acts as the Proton acceptor. Glu-237 is a catalytic residue. Arg-249 serves as a coordination point for substrate.

Belongs to the MetA family.

The protein resides in the cytoplasm. It catalyses the reaction L-homoserine + succinyl-CoA = O-succinyl-L-homoserine + CoA. The protein operates within amino-acid biosynthesis; L-methionine biosynthesis via de novo pathway; O-succinyl-L-homoserine from L-homoserine: step 1/1. Transfers a succinyl group from succinyl-CoA to L-homoserine, forming succinyl-L-homoserine. In Photobacterium profundum (strain SS9), this protein is Homoserine O-succinyltransferase.